A 100-amino-acid chain; its full sequence is Aspartyl/glutamyl-tRNA(Asn/Gln) amidotransferase subunit C (100 aa).

The protein belongs to the GatC family. As to quaternary structure, heterotrimer of A, B and C subunits.

It catalyses the reaction L-glutamyl-tRNA(Gln) + L-glutamine + ATP + H2O = L-glutaminyl-tRNA(Gln) + L-glutamate + ADP + phosphate + H(+). The enzyme catalyses L-aspartyl-tRNA(Asn) + L-glutamine + ATP + H2O = L-asparaginyl-tRNA(Asn) + L-glutamate + ADP + phosphate + 2 H(+). Functionally, allows the formation of correctly charged Asn-tRNA(Asn) or Gln-tRNA(Gln) through the transamidation of misacylated Asp-tRNA(Asn) or Glu-tRNA(Gln) in organisms which lack either or both of asparaginyl-tRNA or glutaminyl-tRNA synthetases. The reaction takes place in the presence of glutamine and ATP through an activated phospho-Asp-tRNA(Asn) or phospho-Glu-tRNA(Gln). The protein is Aspartyl/glutamyl-tRNA(Asn/Gln) amidotransferase subunit C of Streptococcus mutans serotype c (strain ATCC 700610 / UA159).